The primary structure comprises 229 residues: Large ribosomal subunit protein uL1 (229 aa).

It belongs to the universal ribosomal protein uL1 family. In terms of assembly, part of the 50S ribosomal subunit.

In terms of biological role, binds directly to 23S rRNA. The L1 stalk is quite mobile in the ribosome, and is involved in E site tRNA release. Its function is as follows. Protein L1 is also a translational repressor protein, it controls the translation of the L11 operon by binding to its mRNA. The sequence is that of Large ribosomal subunit protein uL1 from Chlorobium chlorochromatii (strain CaD3).